The sequence spans 533 residues: Peptide chain release factor 3 (533 aa).

The region spanning 11–284 is the tr-type G domain; sequence RRRRTFAIIS…ALVGLSPEPL (274 aa). GTP is bound by residues 20–27, 92–96, and 146–149; these read SHPDAGKT, DTPGH, and NKLD.

Belongs to the TRAFAC class translation factor GTPase superfamily. Classic translation factor GTPase family. PrfC subfamily.

It localises to the cytoplasm. Increases the formation of ribosomal termination complexes and stimulates activities of RF-1 and RF-2. It binds guanine nucleotides and has strong preference for UGA stop codons. It may interact directly with the ribosome. The stimulation of RF-1 and RF-2 is significantly reduced by GTP and GDP, but not by GMP. The sequence is that of Peptide chain release factor 3 from Ralstonia nicotianae (strain ATCC BAA-1114 / GMI1000) (Ralstonia solanacearum).